An 84-amino-acid chain; its full sequence is Small ribosomal subunit protein uS17 (84 aa).

This sequence belongs to the universal ribosomal protein uS17 family. Part of the 30S ribosomal subunit.

One of the primary rRNA binding proteins, it binds specifically to the 5'-end of 16S ribosomal RNA. The protein is Small ribosomal subunit protein uS17 of Vibrio atlanticus (strain LGP32) (Vibrio splendidus (strain Mel32)).